The chain runs to 133 residues: Large ribosomal subunit protein uL16 (133 aa).

The protein belongs to the universal ribosomal protein uL16 family. Part of the 50S ribosomal subunit.

Its function is as follows. Binds 23S rRNA and is also seen to make contacts with the A and possibly P site tRNAs. The chain is Large ribosomal subunit protein uL16 from Blochmanniella floridana.